A 122-amino-acid chain; its full sequence is Large ribosomal subunit protein uL14 (122 aa).

Belongs to the universal ribosomal protein uL14 family. As to quaternary structure, part of the 50S ribosomal subunit. Forms a cluster with proteins L3 and L19. In the 70S ribosome, L14 and L19 interact and together make contacts with the 16S rRNA in bridges B5 and B8.

In terms of biological role, binds to 23S rRNA. Forms part of two intersubunit bridges in the 70S ribosome. The chain is Large ribosomal subunit protein uL14 from Acidiphilium cryptum (strain JF-5).